The sequence spans 162 residues: Nucleotide-binding protein Anae109_0095 (162 aa).

The protein belongs to the YajQ family.

Nucleotide-binding protein. The polypeptide is Nucleotide-binding protein Anae109_0095 (Anaeromyxobacter sp. (strain Fw109-5)).